We begin with the raw amino-acid sequence, 432 residues long: Diaminopimelate decarboxylase (432 aa).

Residue Lys66 is modified to N6-(pyridoxal phosphate)lysine. Pyridoxal 5'-phosphate is bound by residues Gly248 and 290 to 293; that span reads EPGR. Positions 293, 330, and 334 each coordinate substrate. Residue Cys361 is the Proton donor of the active site. Residues Glu362 and Tyr390 each coordinate substrate. Tyr390 serves as a coordination point for pyridoxal 5'-phosphate.

It belongs to the Orn/Lys/Arg decarboxylase class-II family. LysA subfamily. In terms of assembly, homodimer. Pyridoxal 5'-phosphate is required as a cofactor.

The enzyme catalyses meso-2,6-diaminopimelate + H(+) = L-lysine + CO2. It participates in amino-acid biosynthesis; L-lysine biosynthesis via DAP pathway; L-lysine from DL-2,6-diaminopimelate: step 1/1. In terms of biological role, specifically catalyzes the decarboxylation of meso-diaminopimelate (meso-DAP) to L-lysine. This is Diaminopimelate decarboxylase from Bacillus methanolicus.